The primary structure comprises 419 residues: MATPIATTTNTPTKAGSLTIAGSGIASVGHITLETLAYIKESHKVFYLVCDPVTEAFIQENGKGPCINLSIYYDSQKSRYDSYLQMCEVMLRDVRNGLDVLGVFYGHPGVFVSPSHRAIALAREEGFNAKMLAGVSAEDCLFADLEFDPASFGCMTCEASELLIRNRPLNPYIHNVIWQVGSVGVTDMTFNNNKFPILIDRLEKDFGPNHTVIHYVGRVIPQSVSKIETFTIADLRKEEVMNHFDAISTLYVPPRDISPVDPTMAEKLGPSGTRVEPIEAFRPSLKWSAQNDKRSYAYNPYESDVVAQLDNYVTPEGHRILQGSPAMKKFLITLATSPQLLQAYRENPSAIVDTVEGLNEQEKYGLKLGSEGAVYALMSRPTGDIAREKELTNDEIANNHGAPYAFVSAVIIAAIICAL.

Positions 1 to 255 are methyltransferase domain; sequence MATPIATTTN…AISTLYVPPR (255 aa). Active-site residues include Arg79, Tyr83, and Tyr105. S-adenosyl-L-methionine-binding residues include Tyr105, His107, Val110, Ala137, Gln179, Gly217, Ser248, and Thr249. The interval 256–381 is clasp domain; the sequence is DISPVDPTMA…GAVYALMSRP (126 aa). The segment at 382 to 404 is precursor leader; that stretch reads TGDIAREKELTNDEIANNHGAPY. Position 408 is an N-methylserine (Ser408). Ala409 carries the N-methylalanine modification. Residue Val410 is modified to N-methylvaline. Ile411 and Ile412 each carry N-methylisoleucine. An N-methylalanine mark is found at Ala413 and Ala414. N-methylisoleucine is present on residues Ile415 and Ile416.

This sequence in the N-terminal section; belongs to the precorrin methyltransferase family. In terms of assembly, homodimer. Post-translationally, gjuMA automethylates at Ser-408, Ala-409, Val-410, Ile-411, Ile-412, Ala-413, Ala-414, Ile-415 and Ile-416 before being processed by ae prolyloligopeptidase which likely forms a peptidyl ester upon removal of the follower propeptide, which then undergoes macrocyclization with the N-terminus of the modified core peptide. Peptide backbone alpha-N-methylations change the physicochemical properties of amide bonds to provide structural constraints and other favorable characteristics including biological membrane permeability to peptides.

It participates in secondary metabolite biosynthesis. In terms of biological role, fusion protein of the methyltransferase gjuM and the type I borosin core peptide; part of the gene cluster that mediates the biosynthesis of a type I borosin, a highly methylated cyclic peptide with potent biological activities. Type I borosins derive from the C-terminus of the fusion protein, and it is the same protein that methylates its own C-terminus using S-adenosyl methionine (SAM). The C-terminus is subsequently cleaved off and macrocyclized by a prolyloligopeptidase to give the final product. The protein is Methyltransferase/ribosomally synthesized type I borosin cyclic peptide precursor gjuMa of Gymnopilus junonius (Spectacular rustgill mushroom).